A 239-amino-acid chain; its full sequence is Ribosomal RNA small subunit methyltransferase G (239 aa).

S-adenosyl-L-methionine is bound by residues glycine 78, phenylalanine 83, 129–130, and arginine 148; that span reads AE.

Belongs to the methyltransferase superfamily. RNA methyltransferase RsmG family.

It localises to the cytoplasm. In terms of biological role, specifically methylates the N7 position of a guanine in 16S rRNA. This Clostridium beijerinckii (strain ATCC 51743 / NCIMB 8052) (Clostridium acetobutylicum) protein is Ribosomal RNA small subunit methyltransferase G.